The following is a 466-amino-acid chain: UDP-N-acetylmuramoylalanine--D-glutamate ligase (466 aa).

121–127 (GTNGKST) provides a ligand contact to ATP.

Belongs to the MurCDEF family.

It is found in the cytoplasm. It carries out the reaction UDP-N-acetyl-alpha-D-muramoyl-L-alanine + D-glutamate + ATP = UDP-N-acetyl-alpha-D-muramoyl-L-alanyl-D-glutamate + ADP + phosphate + H(+). It functions in the pathway cell wall biogenesis; peptidoglycan biosynthesis. Cell wall formation. Catalyzes the addition of glutamate to the nucleotide precursor UDP-N-acetylmuramoyl-L-alanine (UMA). This is UDP-N-acetylmuramoylalanine--D-glutamate ligase from Nitrobacter winogradskyi (strain ATCC 25391 / DSM 10237 / CIP 104748 / NCIMB 11846 / Nb-255).